Here is a 216-residue protein sequence, read N- to C-terminus: Transmembrane emp24 domain-containing protein eca (216 aa).

The N-terminal stretch at 1-20 (MRDQFISLALILCVLHSACG) is a signal peptide. Over 21 to 182 (LYFHISETER…FRHTSESTNS (162 aa)) the chain is Lumenal. In terms of domain architecture, GOLD spans 30–126 (RKCFIEEVPD…QLRVHLDIQV (97 aa)). Positions 134 to 164 (ANVAQKEKLTELQLRIRQLLDQVEQITKEQN) form a coiled coil. The chain crosses the membrane as a helical span at residues 183 to 203 (RVLWWSLAQTVVLVCMGFWQM). Over 204-216 (RHLKSFFEAKKLV) the chain is Cytoplasmic. A Prevents secretion from ER motif is present at residues 213 to 216 (KKLV).

The protein belongs to the EMP24/GP25L family.

The protein localises to the endoplasmic reticulum membrane. Functionally, eca and bai are essential, though not redundant, for dorsoventral patterning of the embryo. Specifically required during early embryogenesis for the activity of maternal tkv, while the zygotic tkv is not affected. Involved in Golgi organization. The polypeptide is Transmembrane emp24 domain-containing protein eca (Drosophila simulans (Fruit fly)).